Consider the following 100-residue polypeptide: Urease subunit gamma (100 aa).

Belongs to the urease gamma subunit family. In terms of assembly, heterotrimer of UreA (gamma), UreB (beta) and UreC (alpha) subunits. Three heterotrimers associate to form the active enzyme. The apoenzyme interacts with an accessory complex composed of UreD, UreF and UreG, which is required for the assembly of the nickel containing metallocenter of UreC. The UreE protein may also play a direct role as a metallochaperone in nickel transfer to the urease apoprotein.

It localises to the cytoplasm. The enzyme catalyses urea + 2 H2O + H(+) = hydrogencarbonate + 2 NH4(+). It functions in the pathway nitrogen metabolism; urea degradation; CO(2) and NH(3) from urea (urease route): step 1/1. Its activity is regulated as follows. The apoenzyme can be activated in vitro in the presence of nickel ions and carbon dioxide, which promotes carbamylation of 'Lys-217' of the UreC (alpha) subunit. The polypeptide is Urease subunit gamma (Klebsiella aerogenes (Enterobacter aerogenes)).